Here is a 118-residue protein sequence, read N- to C-terminus: Turripeptide NCR-01 (118 aa).

Positions 1–16 are cleaved as a signal peptide; that stretch reads MLRLILAVALVAACLA. The tract at residues 63–118 is disordered; sequence QGFQGFLPQPHQKRDSYQHGGYQHQQSFDNFQGSGGMNNDNSDDSFALRNFNNDGY. Residues 85-102 are compositionally biased toward polar residues; that stretch reads QHQQSFDNFQGSGGMNND.

Expressed by the venom duct.

It is found in the secreted. The protein is Turripeptide NCR-01 of Gemmula speciosa (Splendid gem-turris).